The chain runs to 249 residues: tRNA pseudouridine synthase A (249 aa).

Aspartate 52 acts as the Nucleophile in catalysis. A substrate-binding site is contributed by tyrosine 111.

The protein belongs to the tRNA pseudouridine synthase TruA family. In terms of assembly, homodimer.

It catalyses the reaction uridine(38/39/40) in tRNA = pseudouridine(38/39/40) in tRNA. Its function is as follows. Formation of pseudouridine at positions 38, 39 and 40 in the anticodon stem and loop of transfer RNAs. This chain is tRNA pseudouridine synthase A, found in Maricaulis maris (strain MCS10) (Caulobacter maris).